A 444-amino-acid chain; its full sequence is UDP-N-acetylmuramate--L-alanine ligase (444 aa).

110 to 116 (GAHGKTS) lines the ATP pocket.

It belongs to the MurCDEF family. In terms of processing, phosphorylated by StkP in vitro. Dephosphorylated by PhpP in vitro.

Its subcellular location is the cytoplasm. The catalysed reaction is UDP-N-acetyl-alpha-D-muramate + L-alanine + ATP = UDP-N-acetyl-alpha-D-muramoyl-L-alanine + ADP + phosphate + H(+). The protein operates within cell wall biogenesis; peptidoglycan biosynthesis. Functionally, cell wall formation. This is UDP-N-acetylmuramate--L-alanine ligase from Streptococcus pneumoniae serotype 4 (strain ATCC BAA-334 / TIGR4).